The chain runs to 100 residues: Urease subunit gamma (100 aa).

Belongs to the urease gamma subunit family. In terms of assembly, heterotrimer of UreA (gamma), UreB (beta) and UreC (alpha) subunits. Three heterotrimers associate to form the active enzyme.

Its subcellular location is the cytoplasm. It carries out the reaction urea + 2 H2O + H(+) = hydrogencarbonate + 2 NH4(+). It functions in the pathway nitrogen metabolism; urea degradation; CO(2) and NH(3) from urea (urease route): step 1/1. This chain is Urease subunit gamma, found in Paraburkholderia xenovorans (strain LB400).